The following is a 342-amino-acid chain: Anthranilate phosphoribosyltransferase (342 aa).

5-phospho-alpha-D-ribose 1-diphosphate is bound by residues Gly79, 82–83 (GD), Thr87, 89–92 (NIST), 107–115 (KHCNQRISS), and Ser119. Residue Gly79 coordinates anthranilate. Ser91 serves as a coordination point for Mg(2+). Asn110 is an anthranilate binding site. Arg165 contributes to the anthranilate binding site. Asp223 and Glu224 together coordinate Mg(2+).

This sequence belongs to the anthranilate phosphoribosyltransferase family. Homodimer. The cofactor is Mg(2+).

It catalyses the reaction N-(5-phospho-beta-D-ribosyl)anthranilate + diphosphate = 5-phospho-alpha-D-ribose 1-diphosphate + anthranilate. The protein operates within amino-acid biosynthesis; L-tryptophan biosynthesis; L-tryptophan from chorismate: step 2/5. Catalyzes the transfer of the phosphoribosyl group of 5-phosphorylribose-1-pyrophosphate (PRPP) to anthranilate to yield N-(5'-phosphoribosyl)-anthranilate (PRA). This chain is Anthranilate phosphoribosyltransferase, found in Buchnera aphidicola subsp. Acyrthosiphon pisum (strain Tuc7).